The chain runs to 174 residues: Shikimate kinase 2 (174 aa).

Position 12–17 (12–17 (GAGKTT)) interacts with ATP. 2 residues coordinate Mg(2+): Thr-16 and Asp-32. Residues Asp-34, Arg-58, and Gly-79 each coordinate substrate. Positions 112 to 126 (MQQPESTQRPSLTGK) are LID domain. Arg-120 provides a ligand contact to ATP. Arg-139 contacts substrate.

The protein belongs to the shikimate kinase family. AroL subfamily. In terms of assembly, monomer. Requires Mg(2+) as cofactor.

It localises to the cytoplasm. The enzyme catalyses shikimate + ATP = 3-phosphoshikimate + ADP + H(+). It participates in metabolic intermediate biosynthesis; chorismate biosynthesis; chorismate from D-erythrose 4-phosphate and phosphoenolpyruvate: step 5/7. Functionally, catalyzes the specific phosphorylation of the 3-hydroxyl group of shikimic acid using ATP as a cosubstrate. This Photorhabdus laumondii subsp. laumondii (strain DSM 15139 / CIP 105565 / TT01) (Photorhabdus luminescens subsp. laumondii) protein is Shikimate kinase 2.